The chain runs to 157 residues: MGELRLVGGVLRVLVVVGAVFDVAVLNAGAASADGPVQLKSRLGDVCLDAPSGSWFSPLVINPCNGTDFQRWNLTDDRQVESVAFPGECVNIGNALWARLQPCVNWISQHWTVQPDGLVKSDLDACLTVLGGPDPGTWVSTRWCDPNAPDQQWDSVP.

Residues leucine 6–leucine 26 traverse the membrane as a helical segment. Residues alanine 33–proline 157 enclose the Ricin B-type lectin domain.

It localises to the membrane. This is an uncharacterized protein from Mycobacterium tuberculosis (strain CDC 1551 / Oshkosh).